The chain runs to 566 residues: Bacillolysin (566 aa).

Positions 1 to 27 (MKKKSLALVLATGMAVTTFGGTGSAFA) are cleaved as a signal peptide. Residues 28–249 (DSKNVLSTKK…KQDAKAVVKP (222 aa)) constitute a propeptide, activation peptide. Positions 307, 309, 311, and 388 each coordinate Ca(2+). H392 lines the Zn(2+) pocket. E393 is an active-site residue. 2 residues coordinate Zn(2+): H396 and E416. Ca(2+) is bound by residues E427, N433, D435, E437, E440, Y443, T444, K447, and D450. Residue H481 is the Proton donor of the active site.

This sequence belongs to the peptidase M4 family. It depends on Ca(2+) as a cofactor. Zn(2+) is required as a cofactor.

The protein localises to the secreted. The enzyme catalyses Similar, but not identical, to that of thermolysin.. Functionally, extracellular zinc metalloprotease. The protein is Bacillolysin (npr) of Bacillus cereus.